A 134-amino-acid polypeptide reads, in one-letter code: MRMLLHLSLLALGAAYVYAIPTEIPASALVKETLALLSTHRTLLIANETLRIPVPVHKNHQLCTEEIFQGIGTLESQTVQGGTVERLFKNLSLIKKYIGGQKKKCGEERRRVNQFLDYLQEFLGVMNTEWIIES.

A signal peptide spans 1 to 19 (MRMLLHLSLLALGAAYVYA). A glycan (O-linked (GalNAc...) threonine) is linked at T22. N-linked (GlcNAc...) asparagine glycosylation is found at N47 and N90.

This sequence belongs to the IL-5 family. Homodimer; disulfide-linked. Interacts with IL5RA. Interacts with CSF2RB.

The protein resides in the secreted. Functionally, homodimeric cytokine expressed predominantly by T-lymphocytes and NK cells that plays an important role in the survival, differentiation, and chemotaxis of eosinophils. Also acts on activated and resting B-cells to induce immunoglobulin production, growth, and differentiation. Mechanistically, exerts its biological effects through a receptor composed of IL5RA subunit and the cytokine receptor common subunit beta/CSF2RB. Binding to the receptor leads to activation of various kinases including LYN, SYK and JAK2 and thereby propagates signals through the RAS-MAPK and JAK-STAT5 pathways respectively. The sequence is that of Interleukin-5 (IL5) from Macaca mulatta (Rhesus macaque).